A 266-amino-acid chain; its full sequence is Vitamin B12-binding protein (266 aa).

The N-terminal stretch at 1–22 (MAKSLFRALVALSFLAPLWLNA) is a signal peptide. The 242-residue stretch at 25–266 (RVITLSPANT…QLCNALSQVD (242 aa)) folds into the Fe/B12 periplasmic-binding domain. Cyanocob(III)alamin is bound by residues Tyr-50 and 242 to 246 (DWFER). A disulfide bridge links Cys-183 with Cys-259.

It belongs to the BtuF family. The complex is composed of two ATP-binding proteins (BtuD), two transmembrane proteins (BtuC) and a solute-binding protein (BtuF).

It is found in the periplasm. Functionally, part of the ABC transporter complex BtuCDF involved in vitamin B12 import. Binds vitamin B12 and delivers it to the periplasmic surface of BtuC. In Escherichia coli O6:H1 (strain CFT073 / ATCC 700928 / UPEC), this protein is Vitamin B12-binding protein.